The sequence spans 605 residues: UvrABC system protein C (605 aa).

In terms of domain architecture, GIY-YIG spans 14-92; it reads QSCGVYKMIG…IKSLKPSYNI (79 aa). The 36-residue stretch at 202-237 folds into the UVR domain; the sequence is KEVQRQLFSTMEKCSREMNYELAAVYRDRLKFLQQI.

Belongs to the UvrC family. As to quaternary structure, interacts with UvrB in an incision complex.

The protein localises to the cytoplasm. Its function is as follows. The UvrABC repair system catalyzes the recognition and processing of DNA lesions. UvrC both incises the 5' and 3' sides of the lesion. The N-terminal half is responsible for the 3' incision and the C-terminal half is responsible for the 5' incision. This chain is UvrABC system protein C, found in Wolbachia pipientis subsp. Culex pipiens (strain wPip).